Reading from the N-terminus, the 1052-residue chain is MIELKLKNFKCFENKTFNFKDEMVLISAPSGSGKTSILSAIKFALWGSGKTLTKGEIMHGKNSCSVTLTYNDITIQRTKRPNRLVYTKQNEIYEDNEAQIYINEYFGNQSHNNFLESSSLDKTEYLEKMAFGKSTEIIELMKENTKENIRSINDETNNTEGQLSLTKKLLKSVINDWNNRMCSIVEPQIPQIPVFENKVLNVSIYEEKDNIEKEIESLKLKNINHSILKSKLETILKQKCDLMNQIQNVKNNIDVTKNNLIYLNDLSTVSIDDLQEKINKINHEKKILNEKHTKILIEKSNLQNFLNETNTLNQKLTELKIKKENLTPTIVLSSENEQSTQSFSLLKTRETHELNSLKTTLQNDISCMTEIMLKESVCKSQTDSLKKNIVKIEDEVVRLLNITKTVNLTLMNENLSTLYQQSDHFNKIAAQKTILTTKVQNINIEKSKIEEKMVKTQKCNEDDVNKLDFKVQKLEKVKSFNKYLNSIKEHLKQSFPGVETLEFTGHKSQLSVIKDFFEDALYTQKLGDKAPKYKCPKCLHPLSIQHKNDKINIVSYIDEYILEILVKVNELLSEYNNETTIEVMDDEEIENIKDFKKLILEREAFQIQIKKLEEEIKNLPVLYDKSNEIQSLQNTIASYNANNIQLLKEETKLKEEKKLLTQNITMSKLIHEESNKIKDTYKIMIGIDKDITNENIQTYLKKELSDLESELKERLIFETNLLIYNDIVSQIKTILDRQTIITEEIATIKKFIEEHSNIDELIDNLNQEHNLCYTNLLNKHKYEQYNTQLLNYINLCVEYNESLNKVETDMETLKDQLKDDEKCCLELQKLQEYMKQIESFIKIQKKYELELNKFNEWTKLKNEYKKSVSNYETIINDLENRLLKLNNEYSASITLKLKISEAQNIALTSLVDTINIYVQQFLDLFFEEPIVINLTMFKETDKKGLKATPRYQPKVTVNLYYKGVLCPSDLSSLSSGEYARVSLAFTLAFHQINNNKVTPLMLDERTANLDQDLSTLIYSVIKENFPNQLLLVVAHQVITGPFDNIITLQDYN.

Belongs to the IIV-6 050L family.

This is an uncharacterized protein from Invertebrate iridescent virus 6 (IIV-6).